Reading from the N-terminus, the 117-residue chain is Fluoride-specific ion channel FluC 2 (117 aa).

Transmembrane regions (helical) follow at residues 1–21 (MISI…RSAI) and 46–66 (FLIG…AFFV). The Na(+) site is built by Gly-71 and Thr-74. The chain crosses the membrane as a helical span at residues 95-115 (LFLNYSLLQFIIGFIACYIGY).

It belongs to the fluoride channel Fluc/FEX (TC 1.A.43) family.

It is found in the cell membrane. It catalyses the reaction fluoride(in) = fluoride(out). With respect to regulation, na(+) is not transported, but it plays an essential structural role and its presence is essential for fluoride channel function. Fluoride-specific ion channel. Important for reducing fluoride concentration in the cell, thus reducing its toxicity. The sequence is that of Fluoride-specific ion channel FluC 2 from Staphylococcus aureus (strain NCTC 8325 / PS 47).